The following is a 136-amino-acid chain: Large ribosomal subunit protein uL14 (136 aa).

It belongs to the universal ribosomal protein uL14 family.

The chain is Large ribosomal subunit protein uL14 (rpl23) from Dictyostelium discoideum (Social amoeba).